Consider the following 546-residue polypeptide: Chaperonin GroEL (546 aa).

Residues 30-33, Lys-51, 87-91, Gly-415, and Asp-497 each bind ATP; these read TLGP and DGTTT. The tract at residues 527–546 is disordered; the sequence is PKKDSPAPAMPGGGMGGMDF. The segment covering 537 to 546 has biased composition (gly residues); the sequence is PGGGMGGMDF.

It belongs to the chaperonin (HSP60) family. Forms a cylinder of 14 subunits composed of two heptameric rings stacked back-to-back. Interacts with the co-chaperonin GroES.

It localises to the cytoplasm. It catalyses the reaction ATP + H2O + a folded polypeptide = ADP + phosphate + an unfolded polypeptide.. In terms of biological role, together with its co-chaperonin GroES, plays an essential role in assisting protein folding. The GroEL-GroES system forms a nano-cage that allows encapsulation of the non-native substrate proteins and provides a physical environment optimized to promote and accelerate protein folding. In Methylorubrum populi (strain ATCC BAA-705 / NCIMB 13946 / BJ001) (Methylobacterium populi), this protein is Chaperonin GroEL.